The sequence spans 257 residues: Acetylglutamate kinase (257 aa).

Substrate contacts are provided by residues 43-44, R65, and N157; that span reads GG. ATP is bound by residues 180–185 and 208–210; these read DISSIL and IIT.

It belongs to the acetylglutamate kinase family. ArgB subfamily. As to quaternary structure, homodimer.

Its subcellular location is the cytoplasm. It carries out the reaction N-acetyl-L-glutamate + ATP = N-acetyl-L-glutamyl 5-phosphate + ADP. The protein operates within amino-acid biosynthesis; L-arginine biosynthesis; N(2)-acetyl-L-ornithine from L-glutamate: step 2/4. Functionally, catalyzes the ATP-dependent phosphorylation of N-acetyl-L-glutamate. This Buchnera aphidicola subsp. Acyrthosiphon pisum (strain Tuc7) protein is Acetylglutamate kinase.